We begin with the raw amino-acid sequence, 150 residues long: Large ribosomal subunit protein bL9 (150 aa).

This sequence belongs to the bacterial ribosomal protein bL9 family.

Its function is as follows. Binds to the 23S rRNA. In Buchnera aphidicola subsp. Schizaphis graminum (strain Sg), this protein is Large ribosomal subunit protein bL9.